The sequence spans 214 residues: Cell division protein SepF (214 aa).

Residues 24-120 (DNYEEYEERK…NTRRAQESTA (97 aa)) form a disordered region. Basic and acidic residues predominate over residues 30–40 (EERKAVNEPPR). Polar residues predominate over residues 55–67 (ESYSQPAYTQQSE). Residues 69-98 (VVEKPSARYRSAEAHQERDTQQAAYTEKKV) are compositionally biased toward basic and acidic residues. Polar residues predominate over residues 101–120 (MRSSNQSATTNTRRAQESTA).

It belongs to the SepF family. In terms of assembly, homodimer. Interacts with FtsZ.

It is found in the cytoplasm. Its function is as follows. Cell division protein that is part of the divisome complex and is recruited early to the Z-ring. Probably stimulates Z-ring formation, perhaps through the cross-linking of FtsZ protofilaments. Its function overlaps with FtsA. In Enterococcus faecalis (strain ATCC 700802 / V583), this protein is Cell division protein SepF.